The primary structure comprises 63 residues: Cytochrome c oxidase subunit 7C, mitochondrial (63 aa).

Residues Met-1 to Arg-16 constitute a mitochondrion transit peptide. Residues Ser-17–Lys-34 lie on the Mitochondrial matrix side of the membrane. Lys-25 is subject to N6-acetyllysine; alternate. N6-succinyllysine; alternate is present on Lys-25. Residues Trp-35–Arg-57 form a helical membrane-spanning segment. Residues His-58–Lys-63 lie on the Mitochondrial intermembrane side of the membrane.

The protein belongs to the cytochrome c oxidase VIIc family. In terms of assembly, component of the cytochrome c oxidase (complex IV, CIV), a multisubunit enzyme composed of 14 subunits. The complex is composed of a catalytic core of 3 subunits MT-CO1, MT-CO2 and MT-CO3, encoded in the mitochondrial DNA, and 11 supernumerary subunits COX4I, COX5A, COX5B, COX6A, COX6B, COX6C, COX7A, COX7B, COX7C, COX8 and NDUFA4, which are encoded in the nuclear genome. The complex exists as a monomer or a dimer and forms supercomplexes (SCs) in the inner mitochondrial membrane with NADH-ubiquinone oxidoreductase (complex I, CI) and ubiquinol-cytochrome c oxidoreductase (cytochrome b-c1 complex, complex III, CIII), resulting in different assemblies (supercomplex SCI(1)III(2)IV(1) and megacomplex MCI(2)III(2)IV(2)). Interacts with RAB5IF.

The protein localises to the mitochondrion inner membrane. The protein operates within energy metabolism; oxidative phosphorylation. Component of the cytochrome c oxidase, the last enzyme in the mitochondrial electron transport chain which drives oxidative phosphorylation. The respiratory chain contains 3 multisubunit complexes succinate dehydrogenase (complex II, CII), ubiquinol-cytochrome c oxidoreductase (cytochrome b-c1 complex, complex III, CIII) and cytochrome c oxidase (complex IV, CIV), that cooperate to transfer electrons derived from NADH and succinate to molecular oxygen, creating an electrochemical gradient over the inner membrane that drives transmembrane transport and the ATP synthase. Cytochrome c oxidase is the component of the respiratory chain that catalyzes the reduction of oxygen to water. Electrons originating from reduced cytochrome c in the intermembrane space (IMS) are transferred via the dinuclear copper A center (CU(A)) of subunit 2 and heme A of subunit 1 to the active site in subunit 1, a binuclear center (BNC) formed by heme A3 and copper B (CU(B)). The BNC reduces molecular oxygen to 2 water molecules using 4 electrons from cytochrome c in the IMS and 4 protons from the mitochondrial matrix. This Mus musculus (Mouse) protein is Cytochrome c oxidase subunit 7C, mitochondrial (Cox7c).